Reading from the N-terminus, the 805-residue chain is Phenylalanine--tRNA ligase beta subunit (805 aa).

Positions 39–155 (VKVLGAFRIC…EDAPMGMRFI (117 aa)) constitute a tRNA-binding domain. Positions 408–479 (DTSRAYRFDP…RVASLTKLQG (72 aa)) constitute a B5 domain. D457, D463, E466, and E467 together coordinate Mg(2+). The FDX-ACB domain occupies 707 to 804 (SDLQAVERDF…VAKATGATLR (98 aa)).

This sequence belongs to the phenylalanyl-tRNA synthetase beta subunit family. Type 1 subfamily. In terms of assembly, tetramer of two alpha and two beta subunits. Mg(2+) is required as a cofactor.

Its subcellular location is the cytoplasm. It catalyses the reaction tRNA(Phe) + L-phenylalanine + ATP = L-phenylalanyl-tRNA(Phe) + AMP + diphosphate + H(+). The sequence is that of Phenylalanine--tRNA ligase beta subunit from Cereibacter sphaeroides (strain ATCC 17023 / DSM 158 / JCM 6121 / CCUG 31486 / LMG 2827 / NBRC 12203 / NCIMB 8253 / ATH 2.4.1.) (Rhodobacter sphaeroides).